Consider the following 698-residue polypeptide: MOXD1 homolog 1 (698 aa).

An N-terminal signal peptide occupies residues 1–20; the sequence is MSVQDVLWIVLTVQLSFGLA. Asn-36, Asn-140, and Asn-221 each carry an N-linked (GlcNAc...) asparagine glycan. Residues 54-174 enclose the DOMON domain; sequence GLYWLKWWIN…DTFKVLWSIG (121 aa). Residue Tyr-232 is part of the active site. 2 residues coordinate Cu cation: His-265 and His-266. A disulfide bridge connects residues Cys-272 and Cys-309. Cu cation-binding residues include His-347, His-425, and His-427. Disulfide bonds link Cys-403-Cys-516 and Cys-479-Cys-501. His-425 is an active-site residue. Asn-465 is a glycosylation site (N-linked (GlcNAc...) asparagine). Met-500 contributes to the Cu cation binding site. Residues Asn-538 and Asn-561 are each glycosylated (N-linked (GlcNAc...) asparagine).

Belongs to the copper type II ascorbate-dependent monooxygenase family. Cu(2+) is required as a cofactor.

The protein resides in the secreted. The protein is MOXD1 homolog 1 of Drosophila melanogaster (Fruit fly).